Reading from the N-terminus, the 617-residue chain is Leucine aminopeptidase 2 (617 aa).

A peptide contacts are provided by residues 139–141 and 271–276; these read QCQ and PYGGME. A Zn(2+)-binding site is contributed by H300. Residue E301 is the Proton acceptor of the active site. Residues H304 and E323 each coordinate Zn(2+). Residue Y388 is the Proton donor of the active site.

The protein belongs to the peptidase M1 family. Requires Zn(2+) as cofactor.

The protein localises to the cytoplasm. Its subcellular location is the nucleus. The enzyme catalyses an epoxide + H2O = an ethanediol. In terms of biological role, aminopeptidase that preferentially cleaves di- and tripeptides. Also has low epoxide hydrolase activity (in vitro). Can hydrolyze the epoxide leukotriene LTA(4) but it forms preferentially 5,6-dihydroxy-7,9,11,14-eicosatetraenoic acid rather than the cytokine leukotriene B(4) as the product compared to the homologous mammalian enzyme (in vitro). The polypeptide is Leucine aminopeptidase 2 (Neosartorya fischeri (strain ATCC 1020 / DSM 3700 / CBS 544.65 / FGSC A1164 / JCM 1740 / NRRL 181 / WB 181) (Aspergillus fischerianus)).